Here is a 109-residue protein sequence, read N- to C-terminus: Oncomodulin (109 aa).

S2 carries the post-translational modification N-acetylserine. 2 EF-hand domains span residues 39-74 (MSAS…FQSD) and 78-109 (LTES…MVHS). Ca(2+) is bound by residues D52, D54, S56, Y58, E63, D91, D93, D95, K97, and E102. The tract at residues 82–109 (ETKSLMDAADNDGDGKIGADEFQEMVHS) is disordered. Over residues 94-109 (GDGKIGADEFQEMVHS) the composition is skewed to basic and acidic residues.

It belongs to the parvalbumin family. Found in tumor tissues and not detected in normal tissues.

Functionally, has some calmodulin-like activity with respect to enzyme activation and growth regulation. Binds two calcium ions. The chain is Oncomodulin (Ocm) from Mus musculus (Mouse).